A 415-amino-acid polypeptide reads, in one-letter code: L-cysteine:1D-myo-inositol 2-amino-2-deoxy-alpha-D-glucopyranoside ligase (415 aa).

Position 43 (Cys43) interacts with Zn(2+). Residues 43–46, Thr58, and 81–83 contribute to the L-cysteinyl-5'-AMP site; these read CGIT and NVT. The 'HIGH' region signature appears at 45-55; that stretch reads ITPYDATHLGH. The short motif at 187–192 is the 'ERGGDP' region element; it reads ERGGDP. Trp227 is an L-cysteinyl-5'-AMP binding site. Position 231 (Cys231) interacts with Zn(2+). 249–251 lines the L-cysteinyl-5'-AMP pocket; that stretch reads GSD. Residue His256 participates in Zn(2+) binding. Residue Ile283 coordinates L-cysteinyl-5'-AMP. Residues 289-293 carry the 'KMSKS' region motif; it reads KMSKS.

The protein belongs to the class-I aminoacyl-tRNA synthetase family. MshC subfamily. In terms of assembly, monomer. The cofactor is Zn(2+).

The enzyme catalyses 1D-myo-inositol 2-amino-2-deoxy-alpha-D-glucopyranoside + L-cysteine + ATP = 1D-myo-inositol 2-(L-cysteinylamino)-2-deoxy-alpha-D-glucopyranoside + AMP + diphosphate + H(+). Catalyzes the ATP-dependent condensation of GlcN-Ins and L-cysteine to form L-Cys-GlcN-Ins. The protein is L-cysteine:1D-myo-inositol 2-amino-2-deoxy-alpha-D-glucopyranoside ligase of Saccharomonospora viridis (strain ATCC 15386 / DSM 43017 / JCM 3036 / CCUG 5913 / NBRC 12207 / NCIMB 9602 / P101) (Thermoactinomyces viridis).